The following is a 185-amino-acid chain: Ribosome-recycling factor (185 aa).

Positions 138–157 (ELKKLEKDHTASEDEVKRAQ) are disordered.

Belongs to the RRF family.

It localises to the cytoplasm. In terms of biological role, responsible for the release of ribosomes from messenger RNA at the termination of protein biosynthesis. May increase the efficiency of translation by recycling ribosomes from one round of translation to another. In Desulfitobacterium hafniense (strain DSM 10664 / DCB-2), this protein is Ribosome-recycling factor.